We begin with the raw amino-acid sequence, 161 residues long: Succinate dehydrogenase assembly factor 2, mitochondrial (161 aa).

A mitochondrion-targeting transit peptide spans 1–31 (MSLLRVTRSSGHLSAVCRLPARSISTTSILL).

The protein belongs to the SDHAF2 family. As to quaternary structure, interacts with the flavoprotein subunit within the SDH catalytic dimer.

It is found in the mitochondrion matrix. Its function is as follows. Plays an essential role in the assembly of succinate dehydrogenase (SDH), an enzyme complex (also referred to as respiratory complex II) that is a component of both the tricarboxylic acid (TCA) cycle and the mitochondrial electron transport chain, and which couples the oxidation of succinate to fumarate with the reduction of ubiquinone (coenzyme Q) to ubiquinol. Required for flavinylation (covalent attachment of FAD) of the flavoprotein subunit of the SDH catalytic dimer. This chain is Succinate dehydrogenase assembly factor 2, mitochondrial, found in Aedes aegypti (Yellowfever mosquito).